The following is a 542-amino-acid chain: Hydroxylamine reductase (542 aa).

[4Fe-4S] cluster contacts are provided by C3, C6, C15, and C21. Residues H243, E267, C311, C398, C426, C451, E485, and K487 each contribute to the hybrid [4Fe-2O-2S] cluster site. C398 is modified (cysteine persulfide).

This sequence belongs to the HCP family. [4Fe-4S] cluster is required as a cofactor. Hybrid [4Fe-2O-2S] cluster serves as cofactor.

Its subcellular location is the cytoplasm. It catalyses the reaction A + NH4(+) + H2O = hydroxylamine + AH2 + H(+). Catalyzes the reduction of hydroxylamine to form NH(3) and H(2)O. In Syntrophobacter fumaroxidans (strain DSM 10017 / MPOB), this protein is Hydroxylamine reductase.